Consider the following 482-residue polypeptide: tRNA sulfurtransferase (482 aa).

The 105-residue stretch at L61–R165 folds into the THUMP domain. Residues L183–I184, K265, G287, and Q296 each bind ATP. An intrachain disulfide couples C344 to C456. One can recognise a Rhodanese domain in the interval F404–P482. Residue C456 is the Cysteine persulfide intermediate of the active site.

This sequence belongs to the ThiI family.

It is found in the cytoplasm. It catalyses the reaction [ThiI sulfur-carrier protein]-S-sulfanyl-L-cysteine + a uridine in tRNA + 2 reduced [2Fe-2S]-[ferredoxin] + ATP + H(+) = [ThiI sulfur-carrier protein]-L-cysteine + a 4-thiouridine in tRNA + 2 oxidized [2Fe-2S]-[ferredoxin] + AMP + diphosphate. It carries out the reaction [ThiS sulfur-carrier protein]-C-terminal Gly-Gly-AMP + S-sulfanyl-L-cysteinyl-[cysteine desulfurase] + AH2 = [ThiS sulfur-carrier protein]-C-terminal-Gly-aminoethanethioate + L-cysteinyl-[cysteine desulfurase] + A + AMP + 2 H(+). The protein operates within cofactor biosynthesis; thiamine diphosphate biosynthesis. Catalyzes the ATP-dependent transfer of a sulfur to tRNA to produce 4-thiouridine in position 8 of tRNAs, which functions as a near-UV photosensor. Also catalyzes the transfer of sulfur to the sulfur carrier protein ThiS, forming ThiS-thiocarboxylate. This is a step in the synthesis of thiazole, in the thiamine biosynthesis pathway. The sulfur is donated as persulfide by IscS. The chain is tRNA sulfurtransferase from Citrobacter koseri (strain ATCC BAA-895 / CDC 4225-83 / SGSC4696).